Reading from the N-terminus, the 283-residue chain is 2-dehydro-3-deoxyphosphooctonate aldolase (283 aa).

Belongs to the KdsA family.

The protein resides in the cytoplasm. The catalysed reaction is D-arabinose 5-phosphate + phosphoenolpyruvate + H2O = 3-deoxy-alpha-D-manno-2-octulosonate-8-phosphate + phosphate. Its pathway is carbohydrate biosynthesis; 3-deoxy-D-manno-octulosonate biosynthesis; 3-deoxy-D-manno-octulosonate from D-ribulose 5-phosphate: step 2/3. The protein operates within bacterial outer membrane biogenesis; lipopolysaccharide biosynthesis. The polypeptide is 2-dehydro-3-deoxyphosphooctonate aldolase (Vibrio cholerae serotype O1 (strain ATCC 39315 / El Tor Inaba N16961)).